Here is an 853-residue protein sequence, read N- to C-terminus: DNA mismatch repair protein MutS (853 aa).

614 to 621 provides a ligand contact to ATP; it reads GPNMGGKS.

It belongs to the DNA mismatch repair MutS family.

Its function is as follows. This protein is involved in the repair of mismatches in DNA. It is possible that it carries out the mismatch recognition step. This protein has a weak ATPase activity. The chain is DNA mismatch repair protein MutS from Klebsiella pneumoniae subsp. pneumoniae (strain ATCC 700721 / MGH 78578).